Here is a 114-residue protein sequence, read N- to C-terminus: Hemerythrin subunit 1 (114 aa).

Positions 26, 55, 59, 74, 78, 102, and 107 each coordinate Fe cation.

The protein belongs to the hemerythrin family.

In terms of biological role, hemerythrin is a respiratory protein in blood cells of certain marine worms. The oxygen-binding site in each chain contains two iron atoms. The polypeptide is Hemerythrin subunit 1 (Golfingia vulgaris (Marine worm)).